The following is a 648-amino-acid chain: Solute carrier family 23 member 2 (648 aa).

Positions 1–21 (MMGIGKNTASKSVEAGGSTEG) are disordered. Topologically, residues 9-110 (ASKSVEAGGS…LCIFLGLQHY (102 aa)) are cytoplasmic. Serine 70 carries the phosphoserine modification. Residue threonine 75 is modified to Phosphothreonine. Phosphoserine is present on serine 78. The residue at position 79 (threonine 79) is a Phosphothreonine. Serine 81 carries the phosphoserine modification. Residues 111–131 (LTCFSGTIAVPFLLADAMCVG) form a helical membrane-spanning segment. Residues 132-139 (DDQWATSQ) lie on the Extracellular side of the membrane. A helical membrane pass occupies residues 140-160 (LIGTIFFCVGITTLLQTTFGC). Position 161 (arginine 161) is a topological domain, cytoplasmic. A helical membrane pass occupies residues 162–182 (LPLFQASAFAFLAPARAILSL). Topologically, residues 183–216 (DKWKCNTTEITVANGTAELLEHIWHPRIQEIQGA) are extracellular. N-linked (GlcNAc...) asparagine glycans are attached at residues asparagine 188 and asparagine 196. The helical transmembrane segment at 217–237 (IIMSSLIEVVIGLLGLPGALL) threads the bilayer. Residues 238–264 (RYIGPLTITPTVALIGLSGFQAAGERA) lie on the Cytoplasmic side of the membrane. The helical transmembrane segment at 265–282 (GKHWGIAMLTIFLVLLFS) threads the bilayer. Residues 283 to 286 (QYAR) lie on the Extracellular side of the membrane. The helical intramembrane region spans 287 to 300 (NVKFPLPIYKSKKG). Residues 301–307 (WTAYKFQ) are Extracellular-facing. The helical transmembrane segment at 308–328 (LFKMFPIILAILVSWLLCFIF) threads the bilayer. The Cytoplasmic segment spans residues 329 to 369 (TVTDVFPSNSTDYGYYARTDARKGVLLVAPWFKVPYPFQWG). The helical transmembrane segment at 370–390 (MPTVSAAGVIGMLSAVVASII) threads the bilayer. The Extracellular portion of the chain corresponds to 391–415 (ESIGDYYACARLSCAPPPPIHAINR). Residues 416–436 (GIFVEGLSCVLDGIFGTGNGS) form a helical membrane-spanning segment. Residues 437–459 (TSSSPNIGVLGITKVGSRRVIQY) lie on the Cytoplasmic side of the membrane. A helical transmembrane segment spans residues 460–480 (GAALMLGLGMVGKFSALFASL). Residues 481 to 483 (PDP) are Extracellular-facing. Residues 484–504 (VLGALFCTLFGMITAVGLSNL) traverse the membrane as a helical segment. The Cytoplasmic portion of the chain corresponds to 505–514 (QFIDLNSSRN). The helical transmembrane segment at 515–535 (LFVLGFSIFFGLVLPSYLRQN) threads the bilayer. At 536–545 (PLVTGITGID) the chain is on the extracellular side. Residues 546–566 (QILNVLLTTAMFVGGCVAFIL) traverse the membrane as a helical segment. The Cytoplasmic portion of the chain corresponds to 567 to 648 (DNTIPGTPEE…SSDKDSQATV (82 aa)). Phosphothreonine is present on threonine 647.

This sequence belongs to the nucleobase:cation symporter-2 (NCS2) (TC 2.A.40) family. Interacts with CLSTN3. In terms of processing, phosphorylated. As to expression, expressed in metabolically active and specialized tissues, including high expression in brain and adrenals. Detected in a wide range of tissues. Expression in kidney is almost undetectable.

The protein resides in the cell membrane. The catalysed reaction is L-ascorbate(out) + 2 Na(+)(out) = L-ascorbate(in) + 2 Na(+)(in). Functionally, sodium/ascorbate cotransporter. Mediates electrogenic uptake of vitamin C, with a stoichiometry of 2 Na(+) for each ascorbate. The polypeptide is Solute carrier family 23 member 2 (Slc23a2) (Mus musculus (Mouse)).